A 639-amino-acid polypeptide reads, in one-letter code: MKQENLTQECCSTSPKISKGLMVLQSIASRGCDTQDSEKKPQSTQQSLKKSSQAAAGYFYDKEDQIRKLSKHNGFLSEMEDMRKAFLMRPGCPQFSTRTTSMSHVGSAIMVDLPRTCSGVWKLTEDHPLGRLGSASSVDGRVFPFSKSACELNYPRKRSEPSDPSPTGSPTVVKKSQRTRTPWYISVIHEKDHSLLLMGEELQRFSEMESQMQKKDQEILTLQKEKEALKKQLKNLLRGKGTETSSASIKMDRSFETPLKLGRMSVLKTIYKEEDELQHWMQMQEEYSMAESSKELHVEPGSAIEEKSSEGPPEEAAAAKLSRPSQSKTETLLEVGPEEEEEEEEEEVEGDEAKGTEEGEILVNEEEASWELREDEECHPKRSYSMTESFEEELMAQLEEYERMLMDFQRELEFTRSRYSLATGTITSLQRQTDFQESQLRKVTTENELLEKELRERKQQIQDMTDKFSNLREEKKHQEIMGLIEKENLVLRQQVADLKMDLISSERTIKELNTQTKELEDQVNTDKDHLRRWKDLHDDLQTRNEIIQQTEQQTRVVLEATQARYEKLRNKIIQAVFSVSGNKNLSMELSDSYILESLQRIISERSDFYSQLKQKGVKVPPLQQSDVSLPSKIKKMASK.

The segment at 154–176 (YPRKRSEPSDPSPTGSPTVVKKS) is disordered. Residues 203–242 (QRFSEMESQMQKKDQEILTLQKEKEALKKQLKNLLRGKGT) are a coiled coil. The disordered stretch occupies residues 291–385 (ESSKELHVEP…EECHPKRSYS (95 aa)). A compositionally biased stretch (basic and acidic residues) spans 292 to 309 (SSKELHVEPGSAIEEKSS). Positions 310-320 (EGPPEEAAAAK) are enriched in low complexity. Composition is skewed to acidic residues over residues 336-350 (GPEE…EVEG) and 358-369 (EGEILVNEEEAS). Positions 370 to 380 (WELREDEECHP) are enriched in basic and acidic residues.

This Mus musculus (Mouse) protein is Coiled-coil domain-containing protein 27 (Ccdc27).